We begin with the raw amino-acid sequence, 335 residues long: Phosphate acyltransferase (335 aa).

It belongs to the PlsX family. In terms of assembly, homodimer. Probably interacts with PlsY.

It localises to the cytoplasm. The catalysed reaction is a fatty acyl-[ACP] + phosphate = an acyl phosphate + holo-[ACP]. The protein operates within lipid metabolism; phospholipid metabolism. Functionally, catalyzes the reversible formation of acyl-phosphate (acyl-PO(4)) from acyl-[acyl-carrier-protein] (acyl-ACP). This enzyme utilizes acyl-ACP as fatty acyl donor, but not acyl-CoA. This Streptococcus pyogenes serotype M18 (strain MGAS8232) protein is Phosphate acyltransferase.